The chain runs to 165 residues: Dihydrofolate reductase type A13 (165 aa).

The 156-residue stretch at 7–162 (RIYLVAAMGA…ITYTHSVYAR (156 aa)) folds into the DHFR domain.

It belongs to the dihydrofolate reductase family. As to quaternary structure, homodimer.

The catalysed reaction is (6S)-5,6,7,8-tetrahydrofolate + NADP(+) = 7,8-dihydrofolate + NADPH + H(+). It participates in cofactor biosynthesis; tetrahydrofolate biosynthesis; 5,6,7,8-tetrahydrofolate from 7,8-dihydrofolate: step 1/1. Its function is as follows. Key enzyme in folate metabolism. Catalyzes an essential reaction for de novo glycine and purine synthesis, and for DNA precursor synthesis. This chain is Dihydrofolate reductase type A13 (dfrA13), found in Escherichia coli.